We begin with the raw amino-acid sequence, 92 residues long: RNA-binding protein Hfq (92 aa).

The Sm domain maps to 11-71 (DRFLNHLRVN…ISTIIPSSYV (61 aa)).

The protein belongs to the Hfq family. As to quaternary structure, homohexamer.

RNA chaperone that binds small regulatory RNA (sRNAs) and mRNAs to facilitate mRNA translational regulation in response to envelope stress, environmental stress and changes in metabolite concentrations. Also binds with high specificity to tRNAs. The protein is RNA-binding protein Hfq of Thermotoga maritima (strain ATCC 43589 / DSM 3109 / JCM 10099 / NBRC 100826 / MSB8).